A 221-amino-acid chain; its full sequence is Uracil-DNA glycosylase 1 (221 aa).

D61 functions as the Proton acceptor in the catalytic mechanism.

Belongs to the uracil-DNA glycosylase (UDG) superfamily. UNG family.

Its subcellular location is the cytoplasm. It catalyses the reaction Hydrolyzes single-stranded DNA or mismatched double-stranded DNA and polynucleotides, releasing free uracil.. Excises uracil residues from the DNA which can arise as a result of misincorporation of dUMP residues by DNA polymerase or due to deamination of cytosine. The protein is Uracil-DNA glycosylase 1 of Listeria monocytogenes serotype 4b (strain F2365).